Here is a 538-residue protein sequence, read N- to C-terminus: Small ribosomal subunit protein uS3m (538 aa).

The interval 111-134 (SSEGTEEERNEVRGRGAGKRVESI) is disordered. Residues 120-134 (NEVRGRGAGKRVESI) show a composition bias toward basic and acidic residues.

It belongs to the universal ribosomal protein uS3 family.

The protein resides in the mitochondrion. The polypeptide is Small ribosomal subunit protein uS3m (RPS3) (Oryza sativa subsp. japonica (Rice)).